The sequence spans 320 residues: Putative cyclin-D7-1 (320 aa).

The disordered stretch occupies residues 1–46; that stretch reads MDDDDDTSFNNSLDLYCDEDPFDSTPPPPPPPPEQQQQAGTTTPDD. Positions 24 to 34 are enriched in pro residues; that stretch reads STPPPPPPPPE. Low complexity predominate over residues 35-44; sequence QQQQAGTTTP.

The protein belongs to the cyclin family. Cyclin D subfamily.

This is Putative cyclin-D7-1 (CYCD7-1) from Oryza sativa subsp. japonica (Rice).